The sequence spans 153 residues: Large ribosomal subunit protein uL22 (153 aa).

Residues 128–153 (ADRRARRAAAKPAASASPAANEGVPA) form a disordered region. A compositionally biased stretch (low complexity) spans 137-147 (AKPAASASPAA).

This sequence belongs to the universal ribosomal protein uL22 family. As to quaternary structure, part of the 50S ribosomal subunit.

Functionally, this protein binds specifically to 23S rRNA; its binding is stimulated by other ribosomal proteins, e.g. L4, L17, and L20. It is important during the early stages of 50S assembly. It makes multiple contacts with different domains of the 23S rRNA in the assembled 50S subunit and ribosome. Its function is as follows. The globular domain of the protein is located near the polypeptide exit tunnel on the outside of the subunit, while an extended beta-hairpin is found that lines the wall of the exit tunnel in the center of the 70S ribosome. In Acidiphilium cryptum (strain JF-5), this protein is Large ribosomal subunit protein uL22.